The primary structure comprises 161 residues: Large ribosomal subunit protein bL17 (161 aa).

A compositionally biased stretch (basic and acidic residues) spans 132 to 144 (ARAKRAEDNRKAL). Residues 132 to 161 (ARAKRAEDNRKALEAQQAQAEAETTGETKA) form a disordered region. Residues 145–161 (EAQQAQAEAETTGETKA) are compositionally biased toward low complexity.

Belongs to the bacterial ribosomal protein bL17 family. As to quaternary structure, part of the 50S ribosomal subunit. Contacts protein L32.

This is Large ribosomal subunit protein bL17 from Koribacter versatilis (strain Ellin345).